We begin with the raw amino-acid sequence, 2561 residues long: Plipastatin synthase subunit A (2561 aa).

A domain 1 (glutamate-activating) region spans residues 1 to 1038; the sequence is MSEHTYSLTH…ATVIREGTDS (1038 aa). The tract at residues 2–300 is condensation 1; sequence SEHTYSLTHA…SSLPIRITVD (299 aa). The segment at 485-888 is adenylation 1; sequence TYAELDMYAS…SIEGVREAAV (404 aa). One can recognise a Carrier 1 domain in the interval 961–1036; it reads APRNVTEMKL…GLATVIREGT (76 aa). At serine 996 the chain carries O-(pantetheine 4'-phosphoryl)serine. Residues 1048–1338 form a condensation 2 region; it reads KQETYPVSSA…NTLALRTRPE (291 aa). The segment at 1048–2554 is domain 2 (D-ornithine-activating); the sequence is KQETYPVSSA…ELTLSALSSI (1507 aa). Residues 1525-1932 form an adenylation 2 region; it reads SYRLLNERAN…QTGLVREAAV (408 aa). The Carrier 2 domain occupies 2007–2081; it reads APVNDLQKTM…ELCGHITPLA (75 aa). Serine 2042 bears the O-(pantetheine 4'-phosphoryl)serine mark. Positions 2089 to 2554 are epimerization; it reads AEGEAELTPI…ELTLSALSSI (466 aa).

This sequence belongs to the ATP-dependent AMP-binding enzyme family. Pantetheine 4'-phosphate is required as a cofactor.

This protein is a multifunctional enzyme, able to activate and polymerize the amino acids Glu and Orn as part of the biosynthesis of the lipopeptide antibiotic lipastatin. The Orn residue is further epimerized to the D-isomer form. The activation sites for these amino acids consist of individual domains. The chain is Plipastatin synthase subunit A (ppsA) from Bacillus subtilis (strain 168).